Consider the following 505-residue polypeptide: Proton-coupled zinc antiporter SLC30A1 (505 aa).

The Cytoplasmic portion of the chain corresponds to 1–10 (MGCWGRNRGR). The chain crosses the membrane as a helical span at residues 11–31 (LLCMLALTFMFMVLEVVVSRV). The Extracellular portion of the chain corresponds to 32–35 (TSSL). A helical membrane pass occupies residues 36–56 (AMLSDSFHMLSDVLALVVALV). Zn(2+)-binding residues include histidine 43 and aspartate 47. Residues 57–80 (AERFARRTHATQKNTFGWIRAEVM) lie on the Cytoplasmic side of the membrane. Residues 81 to 101 (GALVNAIFLTGLCFAILLEAI) form a helical membrane-spanning segment. Over 102-113 (ERFVEPHEMQQP) the chain is Extracellular. A helical transmembrane segment spans residues 114–134 (LVVLGVGVAGLLVNVLGLCLF). At 135–246 (HHHSGFSQDS…RAGQLNMRGV (112 aa)) the chain is on the cytoplasmic side. Residues 142-215 (QDSGHSHSHG…DPEKPRSGDT (74 aa)) are disordered. The segment covering 187-199 (TNTLVANTSNSNG) has biased composition (polar residues). Residues 203–214 (DPADPEKPRSGD) show a composition bias toward basic and acidic residues. Residues 247–267 (FLHVLGDALGSVIVVVNALVF) form a helical membrane-spanning segment. Zn(2+)-binding residues include histidine 249 and aspartate 253. Residues 268 to 306 (YFSWKGCSEGDFCVNPCFPDPCKAFVEIINSTHASVYEA) lie on the Extracellular side of the membrane. Asparagine 297 carries an N-linked (GlcNAc...) asparagine glycan. A helical transmembrane segment spans residues 307–327 (GPCWVLYLDPTLCVVMVCILL). Over 328 to 505 (YTTYPLLKES…MPNKQPESSL (178 aa)) the chain is Cytoplasmic. The residue at position 504 (serine 504) is a Phosphoserine.

Belongs to the cation diffusion facilitator (CDF) transporter (TC 2.A.4) family. SLC30A subfamily. As to quaternary structure, homodimer. Interacts with TMEM163. Interacts and forms a complex with TMC6 and TMC8; the interaction regulates zinc transport into the ER.

It localises to the cell membrane. It is found in the basolateral cell membrane. The protein resides in the cytoplasmic vesicle membrane. The protein localises to the cytoplasm. Its subcellular location is the endoplasmic reticulum membrane. It localises to the golgi apparatus membrane. It is found in the nucleus membrane. The enzyme catalyses Zn(2+)(in) + 2 H(+)(out) = Zn(2+)(out) + 2 H(+)(in). Its function is as follows. Zinc ion:proton antiporter that could function at the plasma membrane mediating zinc efflux from cells against its electrochemical gradient protecting them from intracellular zinc accumulation and toxicity. Alternatively, could prevent the transport to the plasma membrane of CACNB2, the L-type calcium channels regulatory subunit, through a yet to be defined mechanism. By modulating the expression of these channels at the plasma membrane, could prevent calcium and zinc influx into cells. By the same mechanism, could also prevent L-type calcium channels-mediated heavy metal influx into cells. In some cells, could also function as a zinc ion:proton antiporter mediating zinc entry into the lumen of cytoplasmic vesicles. In macrophages, can increase zinc ions concentration into the lumen of cytoplasmic vesicles containing engulfed bacteria and could help inactivate them. Forms a complex with TMC6/EVER1 and TMC8/EVER2 at the ER membrane of keratynocytes which facilitates zinc uptake into the ER. Down-regulates the activity of transcription factors induced by zinc and cytokines. The sequence is that of Proton-coupled zinc antiporter SLC30A1 from Macaca fascicularis (Crab-eating macaque).